The sequence spans 179 residues: MANLKERYQNEVAAQLQEQFSYANVMQIPRITKVTLNMGIGDATSDKKLIDNAMGDLEKLSGQRPVITKARKSIAGFKVREGWPIGIKVTLRSERMWDFLDRLVNIAIPRVRDFRGLNPKSFDGRGNYSMGVREQIIFPELEYDKIDRIRGLDVTITTTANTDEEGRALLSALNFPFKK.

Belongs to the universal ribosomal protein uL5 family. In terms of assembly, part of the 50S ribosomal subunit; part of the 5S rRNA/L5/L18/L25 subcomplex. Contacts the 5S rRNA and the P site tRNA. Forms a bridge to the 30S subunit in the 70S ribosome.

Functionally, this is one of the proteins that bind and probably mediate the attachment of the 5S RNA into the large ribosomal subunit, where it forms part of the central protuberance. In the 70S ribosome it contacts protein S13 of the 30S subunit (bridge B1b), connecting the 2 subunits; this bridge is implicated in subunit movement. Contacts the P site tRNA; the 5S rRNA and some of its associated proteins might help stabilize positioning of ribosome-bound tRNAs. In Chromohalobacter salexigens (strain ATCC BAA-138 / DSM 3043 / CIP 106854 / NCIMB 13768 / 1H11), this protein is Large ribosomal subunit protein uL5.